Reading from the N-terminus, the 173-residue chain is UPF0598 protein F59C6.12 (173 aa).

The protein belongs to the UPF0598 family.

The protein is UPF0598 protein F59C6.12 of Caenorhabditis elegans.